The sequence spans 210 residues: Cytidylate kinase (210 aa).

9–17 (GPAAAGKGT) contributes to the ATP binding site.

Belongs to the cytidylate kinase family. Type 1 subfamily.

The protein resides in the cytoplasm. The enzyme catalyses CMP + ATP = CDP + ADP. It carries out the reaction dCMP + ATP = dCDP + ADP. This is Cytidylate kinase from Agrobacterium fabrum (strain C58 / ATCC 33970) (Agrobacterium tumefaciens (strain C58)).